Consider the following 201-residue polypeptide: Homeobox protein goosecoid-2 (201 aa).

Disordered regions lie at residues 1–55 (MATA…PEAP), 95–124 (PATP…RRTR), and 179–201 (RHQK…KESC). Residues 95–106 (PATPSPLTAPRA) are compositionally biased toward low complexity. The homeobox DNA-binding region spans 123 to 182 (TRRHRTIFSEEQLQALEALFVQNQYPDVGTRERLAVRIRLREERVEVWFKNRRAKWRHQK).

The protein belongs to the paired homeobox family. Bicoid subfamily. In terms of tissue distribution, expressed in adult testis.

It localises to the nucleus. In terms of biological role, may have a role in development. May regulate its own transcription. May bind the bicoid consensus sequence TAATCC. The polypeptide is Homeobox protein goosecoid-2 (Gsc2) (Mus musculus (Mouse)).